Consider the following 371-residue polypeptide: uncharacterized protein (371 aa).

To A.pernix APE_1804 and S.solfataricus SSO2105.

This is an uncharacterized protein from Aeropyrum pernix (strain ATCC 700893 / DSM 11879 / JCM 9820 / NBRC 100138 / K1).